The sequence spans 455 residues: Mitochondrial distribution and morphology protein 10 (455 aa).

Disordered regions lie at residues 216 to 249, 278 to 311, and 377 to 399; these read WETT…EDAV, IRFS…PSPA, and PRSS…PLGE. The segment covering 217–227 has biased composition (low complexity); the sequence is ETTNGENGTNT. Polar residues predominate over residues 228 to 237; it reads SAPGNASNSR. Pro residues predominate over residues 291 to 301; that stretch reads AQIPPPSPFTP.

This sequence belongs to the MDM10 family. Component of the ER-mitochondria encounter structure (ERMES) or MDM complex, composed of MMM1, MDM10, MDM12 and MDM34. Associates with the mitochondrial outer membrane sorting assembly machinery SAM(core) complex.

The protein localises to the mitochondrion outer membrane. Functionally, component of the ERMES/MDM complex, which serves as a molecular tether to connect the endoplasmic reticulum and mitochondria. Components of this complex are involved in the control of mitochondrial shape and protein biogenesis and may function in phospholipid exchange. MDM10 is involved in the late assembly steps of the general translocase of the mitochondrial outer membrane (TOM complex). Functions in the TOM40-specific route of the assembly of outer membrane beta-barrel proteins, including the association of TOM40 with the receptor TOM22 and small TOM proteins. Can associate with the SAM(core) complex as well as the MDM12-MMM1 complex, both involved in late steps of the major beta-barrel assembly pathway, that is responsible for biogenesis of all outer membrane beta-barrel proteins. May act as a switch that shuttles between both complexes and channels precursor proteins into the TOM40-specific pathway. Plays a role in mitochondrial morphology and in the inheritance of mitochondria. This chain is Mitochondrial distribution and morphology protein 10, found in Coprinopsis cinerea (strain Okayama-7 / 130 / ATCC MYA-4618 / FGSC 9003) (Inky cap fungus).